The chain runs to 259 residues: Major cell-binding factor (259 aa).

The N-terminal stretch at 1 to 26 (MVFRKSLLKLAVFALGACVAFSNANA) is a signal peptide.

This sequence belongs to the bacterial solute-binding protein 3 family.

The protein resides in the cell surface. Its function is as follows. Common antigen and a major cell adherence molecule. Most probably involved, with PEB1C, in a binding-protein-dependent transport system for an amino acid. May be involved in binding to intestinal cells. The chain is Major cell-binding factor (peb1A) from Campylobacter jejuni subsp. jejuni serotype O:2 (strain ATCC 700819 / NCTC 11168).